The primary structure comprises 149 residues: Protegrin-5 (149 aa).

A signal peptide spans 1–29; that stretch reads METQRASLCLGRWSLWLLLLGLVVPSASA. The propeptide occupies 30-130; that stretch reads QALSYREAVL…DITCNEVQGV (101 aa). Positions 61–80 are disordered; the sequence is DQPPKADEDPGTPKPVSFTV. Cystine bridges form between Cys85–Cys96, Cys107–Cys124, Cys136–Cys145, and Cys138–Cys143. Position 148 is an arginine amide (Arg148).

Belongs to the cathelicidin family.

The protein localises to the secreted. Functionally, microbicidal activity. The polypeptide is Protegrin-5 (NPG5) (Sus scrofa (Pig)).